The sequence spans 168 residues: MVKDILAPGLRVVFCGINPGLSSANTGFPFAHPANRFWKVIHLAGFTDRQLKPEEAEKLLDFRCGVTKLVDRPTVQATEVKLHELRSGGRNLIEKIEDYQPAALAVLGKQAFEQGFSQRGIAWGKQKIAIGATMVWVLPNPSGLNRIKTEKLVEAYRELDQALIMSGL.

This sequence belongs to the uracil-DNA glycosylase (UDG) superfamily. TDG/mug family. Binds DNA as a monomer.

It localises to the cytoplasm. It carries out the reaction Specifically hydrolyzes mismatched double-stranded DNA and polynucleotides, releasing free uracil.. Excises ethenocytosine and uracil, which can arise by alkylation or deamination of cytosine, respectively, from the corresponding mispairs with guanine in ds-DNA. It is capable of hydrolyzing the carbon-nitrogen bond between the sugar-phosphate backbone of the DNA and the mispaired base. The complementary strand guanine functions in substrate recognition. Required for DNA damage lesion repair in stationary-phase cells. The polypeptide is G/U mismatch-specific DNA glycosylase (Salmonella dublin (strain CT_02021853)).